A 117-amino-acid polypeptide reads, in one-letter code: Multidrug resistance protein EbrB (117 aa).

4 helical membrane-spanning segments follow: residues 3–23 (GLLYLALAIVSEVFGSTMLKL), 31–51 (WPIGGVIAGFLSAFTFLSFSL), 59–79 (AYATWSGVGTALTAIVGFLLF), and 81–101 (ETISLKGVFGLTLVIAGVVVL).

Belongs to the drug/metabolite transporter (DMT) superfamily. Small multidrug resistance (SMR) (TC 2.A.7.1) family. EbrA/EbrB subfamily. The efflux pump is composed of EbrA and EbrB.

It is found in the cell membrane. Part of a multidrug efflux pump. Confers resistance to cationic lipophilic dyes such as ethidium bromide, acriflavine, pyronine Y and safranin O. The efflux is probably coupled to an influx of protons. This is Multidrug resistance protein EbrB (ebrB) from Bacillus atrophaeus.